A 72-amino-acid polypeptide reads, in one-letter code: Large ribosomal subunit protein bL31c (72 aa).

It belongs to the bacterial ribosomal protein bL31 family. Type A subfamily. Part of the 50S ribosomal subunit.

Its subcellular location is the plastid. It localises to the chloroplast. Binds the 23S rRNA. The chain is Large ribosomal subunit protein bL31c (rpl31) from Thalassiosira pseudonana (Marine diatom).